The chain runs to 93 residues: Envelope small membrane protein (93 aa).

The Virion surface portion of the chain corresponds to 1–11 (MMNLLNKSLEE). A helical membrane pass occupies residues 12-32 (NGSVLTAFYIFVAFVALYLLG). Residues 33-93 (RALQAFVQAA…NEFPKNGWKQ (61 aa)) lie on the Intravirion side of the membrane.

It belongs to the gammacoronaviruses E protein family. Homooligomer. Interacts with the M membrane protein in the budding compartment of the host cell, which is located between endoplasmic reticulum and the Golgi complex. The cytoplasmic tails of both proteins are important for this function. Interacts with Nucleoprotein.

It localises to the host Golgi apparatus membrane. Plays a central role in virus morphogenesis and assembly. Acts as a viroporin and self-assembles in host membranes forming pentameric protein-lipid pores that allow ion transport. Also plays a role in the induction of apoptosis. The protein is Envelope small membrane protein of Avian infectious bronchitis virus (strain Portugal/322/82) (IBV).